A 159-amino-acid polypeptide reads, in one-letter code: 3-hydroxyacyl-[acyl-carrier-protein] dehydratase FabZ (159 aa).

The active site involves H58.

The protein belongs to the thioester dehydratase family. FabZ subfamily.

Its subcellular location is the cytoplasm. The catalysed reaction is a (3R)-hydroxyacyl-[ACP] = a (2E)-enoyl-[ACP] + H2O. Its function is as follows. Involved in unsaturated fatty acids biosynthesis. Catalyzes the dehydration of short chain beta-hydroxyacyl-ACPs and long chain saturated and unsaturated beta-hydroxyacyl-ACPs. The protein is 3-hydroxyacyl-[acyl-carrier-protein] dehydratase FabZ of Helicobacter pylori (strain ATCC 700392 / 26695) (Campylobacter pylori).